An 883-amino-acid polypeptide reads, in one-letter code: Glutamate receptor 2 (883 aa).

Positions 1-24 (MQKIMHISVLLSPVLWGLIFGVSS) are cleaved as a signal peptide. The Extracellular segment spans residues 25-543 (NSIQIGGLFP…GVFSFLDPLA (519 aa)). A disulfide bond links Cys-78 and Cys-330. Residues Asn-256, Asn-370, Asn-406, and Asn-413 are each glycosylated (N-linked (GlcNAc...) asparagine). Residues Pro-499, Thr-501, and Arg-506 each contribute to the L-glutamate site. The helical transmembrane segment at 544 to 564 (YEIWMCIVFAYIGVSVVLFLV) threads the bilayer. At 565 to 591 (SRFSPYEWHTEEFEDGRETQSSESTNE) the chain is on the cytoplasmic side. Residues 592–607 (FGIFNSLWFSLGAFMQ) constitute an intramembrane region (helical; Pore-forming). The stretch at 608-610 (QGC) is an intramembrane region. The S-palmitoyl cysteine moiety is linked to residue Cys-610. At 611–616 (DISPRS) the chain is on the cytoplasmic side. A helical membrane pass occupies residues 617–637 (LSGRIVGGVWWFFTLIIISSY). The Extracellular segment spans residues 638-812 (TANLAAFLTV…EKTSALSLSN (175 aa)). 2 residues coordinate L-glutamate: Ser-675 and Thr-676. Ser-683 carries the phosphoserine; by PKC modification. Position 717 is a phosphoserine; by PKG (Ser-717). Glu-726 contributes to the L-glutamate binding site. The cysteines at positions 739 and 794 are disulfide-linked. The chain crosses the membrane as a helical span at residues 813 to 833 (VAGVFYILVGGLGLAMLVALI). Residues 834–883 (EFCYKSRAEAKRMKVAKNAQNINPSSSQNSQNFATYKEGYNVYGIESVKI) are Cytoplasmic-facing. Cys-836 carries S-palmitoyl cysteine lipidation. Ser-860 and Ser-863 each carry phosphoserine. Positions 867–877 (ATYKEGYNVYG) are required for interaction with IQSEC1. Tyr-876 carries the phosphotyrosine modification. Ser-880 is subject to Phosphoserine.

Belongs to the glutamate-gated ion channel (TC 1.A.10.1) family. GRIA2 subfamily. As to quaternary structure, homotetramer or heterotetramer of pore-forming glutamate receptor subunits. Tetramers may be formed by the dimerization of dimers. May interact with MPP4. Forms a ternary complex with GRIP1 and CSPG4. Interacts with ATAD1 in an ATP-dependent manner. ATAD1-catalyzed ATP hydrolysis disrupts binding to ATAD1 and to GRIP1 and leads to AMPAR complex disassembly. Interacts with GRIP1 and GRIP2. Interacts with NSF via its C-terminus. Isoform 1, but not isoform 3, interacts with PICK1. Interacts with CACNG2. Interacts with GRIA1 and SYNDIG1. Part of a complex containing GRIA2, NSF and NAPA and/or NAPB. Interacts with SNX27 (via PDZ domain); the interaction is required for recycling to the plasma membrane when endocytosed and prevent degradation in lysosomes. Interacts with LRFN1. Found in a complex with GRIA1, GRIA3, GRIA4, CNIH2, CNIH3, CACNG2, CACNG3, CACNG4, CACNG5, CACNG7 and CACNG8. Interacts with CACNG5. Interacts with OLFM2. Interacts with AP4B1, AP4E1 and AP4M1; probably indirect it mediates the somatodendritic localization of GRIA2 in neurons. Forms a complex with GRIP1, NSG1 and STX12; controls the intracellular fate of AMPAR and the endosomal sorting of the GRIA2 subunit toward recycling and membrane targeting. Interacts with IQSEC1; the interaction is required for ARF6 activation. Interacts (heterotetramer form) with CNIH2 and CNIH3; this interaction promotes expression at the plasma membrane and extensively modulates their gating properties by slowing deactivation and desensitization kinetics. Post-translationally, palmitoylated. Depalmitoylated upon L-glutamate stimulation. Cys-610 palmitoylation leads to Golgi retention and decreased cell surface expression. In contrast, Cys-836 palmitoylation does not affect cell surface expression but regulates stimulation-dependent endocytosis. Ubiquitinated by RNF167, leading to its degradation. In terms of processing, phosphorylation at Tyr-876 is required for interaction with IQSEC1 and ARF6 activation, which in turn triggers AMPAR internalization for persistent synaptic depression. Post-translationally, N-glycosylated.

The protein localises to the cell membrane. It is found in the postsynaptic cell membrane. The protein resides in the postsynaptic density membrane. The enzyme catalyses Ca(2+)(in) = Ca(2+)(out). It catalyses the reaction Na(+)(in) = Na(+)(out). In terms of biological role, ionotropic glutamate receptor that functions as a ligand-gated cation channel, gated by L-glutamate and glutamatergic agonists such as alpha-amino-3-hydroxy-5-methyl-4-isoxazolepropionic acid (AMPA), quisqualic acid, and kainic acid. L-glutamate acts as an excitatory neurotransmitter at many synapses in the central nervous system and plays an important role in fast excitatory synaptic transmission. Binding of the excitatory neurotransmitter L-glutamate induces a conformation change, leading to the opening of the cation channel, and thereby converts the chemical signal to an electrical impulse upon entry of monovalent and divalent cations such as sodium and calcium. The receptor then desensitizes rapidly and enters in a transient inactive state, characterized by the presence of bound agonist. In the presence of CACNG4 or CACNG7 or CACNG8, shows resensitization which is characterized by a delayed accumulation of current flux upon continued application of L-glutamate. Through complex formation with NSG1, GRIP1 and STX12 controls the intracellular fate of AMPAR and the endosomal sorting of the GRIA2 subunit toward recycling and membrane targeting. In Homo sapiens (Human), this protein is Glutamate receptor 2.